We begin with the raw amino-acid sequence, 562 residues long: Putative transport protein Spro_1639 (562 aa).

The next 5 membrane-spanning stretches (helical) occupy residues 8–28, 37–57, 66–86, 94–114, and 158–178; these read LLNGNYILLLFVVLALGLCLG, LGNSIGVLVVSLLLGQQHFAI, FMLFIFCVGVEAGPNFFSIFF, MLALVMVGSAMVIAIGLGKLF, and HLSLGYALTYLIGLVSLIFGA. RCK C-terminal domains lie at 202–288 and 290–373; these read LDTD…SFRN and KEVF…KIGF. Helical transmembrane passes span 383–403, 406–426, 447–467, 475–495, and 541–561; these read LLAFCAFFIIGLLIGQITIQF, FSFGIGNAAGLLMAGIMLGFL, FGLMVFMAGVGLSAGAGIGNS, MLIAGLIVSLVPVVICFLFGA, and IANVLLTLAGSLIVVLWPGIL.

Belongs to the AAE transporter (TC 2.A.81) family. YbjL subfamily.

It localises to the cell membrane. The sequence is that of Putative transport protein Spro_1639 from Serratia proteamaculans (strain 568).